A 302-amino-acid polypeptide reads, in one-letter code: GTP cyclohydrolase FolE2 (302 aa).

The disordered stretch occupies residues 1–27 (MPKKQLPPKEERHKLFGSVPPKERTKP).

This sequence belongs to the GTP cyclohydrolase IV family.

The catalysed reaction is GTP + H2O = 7,8-dihydroneopterin 3'-triphosphate + formate + H(+). The protein operates within cofactor biosynthesis; 7,8-dihydroneopterin triphosphate biosynthesis; 7,8-dihydroneopterin triphosphate from GTP: step 1/1. In terms of biological role, converts GTP to 7,8-dihydroneopterin triphosphate. This chain is GTP cyclohydrolase FolE2, found in Oceanobacillus iheyensis (strain DSM 14371 / CIP 107618 / JCM 11309 / KCTC 3954 / HTE831).